We begin with the raw amino-acid sequence, 424 residues long: UPF0597 protein Sputw3181_2955 (424 aa).

It belongs to the UPF0597 family.

This Shewanella sp. (strain W3-18-1) protein is UPF0597 protein Sputw3181_2955.